The primary structure comprises 284 residues: Protein pxr1 (284 aa).

Residues 25 to 71 enclose the G-patch domain; sequence TNRLGFKLLSSYGWVNGNGLGEKQHGRIHNIKVSLKDDTLGIGAKAT. Residues 149–253 form a disordered region; it reads DEDRVCEDAS…KVKEGNRPAS (105 aa). A phosphoserine mark is found at serine 159 and serine 160. 2 stretches are compositionally biased toward basic residues: residues 166–181 and 196–206; these read EKRK…KKKT and TKKKKKEHKKK. Basic and acidic residues-rich tracts occupy residues 207 to 224 and 233 to 249; these read DKES…DKEE and KDKP…KEGN.

It belongs to the PINX1 family.

Its subcellular location is the nucleus. The protein resides in the nucleolus. Its function is as follows. Involved in rRNA-processing at A0, A1 and A2 sites and negatively regulates telomerase. The sequence is that of Protein pxr1 (pxr1) from Schizosaccharomyces pombe (strain 972 / ATCC 24843) (Fission yeast).